Here is a 237-residue protein sequence, read N- to C-terminus: Uridylate kinase (237 aa).

11-14 (KLSG) contributes to the ATP binding site. Residue G53 participates in UMP binding. ATP-binding residues include G54 and R58. Residues D73 and 134-141 (TGNPFFTT) contribute to the UMP site. ATP contacts are provided by T161, Y167, and D170.

It belongs to the UMP kinase family. As to quaternary structure, homohexamer.

The protein resides in the cytoplasm. It catalyses the reaction UMP + ATP = UDP + ADP. Its pathway is pyrimidine metabolism; CTP biosynthesis via de novo pathway; UDP from UMP (UMPK route): step 1/1. With respect to regulation, inhibited by UTP. Functionally, catalyzes the reversible phosphorylation of UMP to UDP. The chain is Uridylate kinase from Burkholderia ambifaria (strain ATCC BAA-244 / DSM 16087 / CCUG 44356 / LMG 19182 / AMMD) (Burkholderia cepacia (strain AMMD)).